The primary structure comprises 236 residues: Leucyl/phenylalanyl-tRNA--protein transferase (236 aa).

The protein belongs to the L/F-transferase family.

The protein localises to the cytoplasm. The catalysed reaction is N-terminal L-lysyl-[protein] + L-leucyl-tRNA(Leu) = N-terminal L-leucyl-L-lysyl-[protein] + tRNA(Leu) + H(+). It carries out the reaction N-terminal L-arginyl-[protein] + L-leucyl-tRNA(Leu) = N-terminal L-leucyl-L-arginyl-[protein] + tRNA(Leu) + H(+). It catalyses the reaction L-phenylalanyl-tRNA(Phe) + an N-terminal L-alpha-aminoacyl-[protein] = an N-terminal L-phenylalanyl-L-alpha-aminoacyl-[protein] + tRNA(Phe). Its function is as follows. Functions in the N-end rule pathway of protein degradation where it conjugates Leu, Phe and, less efficiently, Met from aminoacyl-tRNAs to the N-termini of proteins containing an N-terminal arginine or lysine. This is Leucyl/phenylalanyl-tRNA--protein transferase from Yersinia pseudotuberculosis serotype O:1b (strain IP 31758).